Here is a 219-residue protein sequence, read N- to C-terminus: Guanylate kinase (219 aa).

The region spanning 15–194 is the Guanylate kinase-like domain; that stretch reads GLMFVLSSPS…AFAEVQSILK (180 aa). 22–29 serves as a coordination point for ATP; sequence SPSGAGKT.

This sequence belongs to the guanylate kinase family.

The protein localises to the cytoplasm. The catalysed reaction is GMP + ATP = GDP + ADP. In terms of biological role, essential for recycling GMP and indirectly, cGMP. The protein is Guanylate kinase of Bradyrhizobium diazoefficiens (strain JCM 10833 / BCRC 13528 / IAM 13628 / NBRC 14792 / USDA 110).